Here is a 287-residue protein sequence, read N- to C-terminus: MSYTTRQVGAKNSLDYKVYIEKDGKPISAFHDIPLYADEANGIFNMVVEIPRWTNAKLEITKEEPLNPIIQDTKKGKLRFVRNCFPHHGYIHNYGAFPQTWEDPNESHPETKAVGDNDPLDVLEIGEQVAYTGQVKQVKVLGVMALLDEGETDWKVIAIDINDPLAPKLNDIEDVEKHLPGLLRATNEWFRIYKIPDGKPENQFAFSGEAKNKKYTLDVIRECNEAWKKLISGKSADAKKIDLTNTTLSDTATYSAEAASAVPAANVLPDEPIDKSIDKWFFISGSA.

Residue arginine 79 coordinates diphosphate. 3 residues coordinate Mg(2+): aspartate 116, aspartate 121, and aspartate 153.

The protein belongs to the PPase family. Homodimer. The cofactor is Mg(2+).

It is found in the cytoplasm. It catalyses the reaction diphosphate + H2O = 2 phosphate + H(+). The chain is Inorganic pyrophosphatase (IPP1) from Kluyveromyces lactis (strain ATCC 8585 / CBS 2359 / DSM 70799 / NBRC 1267 / NRRL Y-1140 / WM37) (Yeast).